A 640-amino-acid chain; its full sequence is MPIITLPNGDQKSFDHPVSVMEVAQSIGPGLAKNTVAGRVNDRLVDACDLITEDSTLQIITPKDEEGLEIIRHSCAHLVGHAVKQLFPEAKMVIGPVIEEGFYYDIWMPRPFTLDDMAAIEERMKKLIDQDYDVIKKMTPRDEVIKVFTDRGEEYKLRLVEDMPEEKAMGLYYHQEYVDMCRGPHVPNTKFLKSFKLTKISGAYWRGDAKNEQLQRIYGTAWADKKQLAAYIKRIEEAEKRDHRKIGKALDLFHMQEEAPGMVFWHANGWTIYQVLEQYMRKVQQDNGYQEIKTPQIVDFTLWEKSGHAANYVENMFTTHSESRNYAVKPMNCPCHVQVFNQGLKSYRDLPIRLAEFGSCHRNEPSGSLHGIMRVRGFTQDDAHIFCTKEQIGKEVADFIKLTLDVYKDFGFEEVQMKLSTRPEKRVGDDALWDLAEKSLADALDAAGLEWELQPGEGAFYGPKIEFSLKDCLGRVWQCGTIQCDFNLPVRLDASYVTEENERDQPVMLHRAILGSFERFIGILIEHYAGFMPPWLSPVQACVMNITDSQAEASEQVVAKLKENGLRAISDLRNEKIGFKIRERTLERIPYLLVLGDREVEEGTVNVRTRSGKNLGTMSVDAFIDLVKSAVAERGRYIVE.

The TGS domain occupies 1–61 (MPIITLPNGD…TEDSTLQIIT (61 aa)). Residues 242 to 533 (DHRKIGKALD…LIEHYAGFMP (292 aa)) are catalytic. 3 residues coordinate Zn(2+): cysteine 333, histidine 384, and histidine 510.

This sequence belongs to the class-II aminoacyl-tRNA synthetase family. Homodimer. The cofactor is Zn(2+).

The protein resides in the cytoplasm. The catalysed reaction is tRNA(Thr) + L-threonine + ATP = L-threonyl-tRNA(Thr) + AMP + diphosphate + H(+). Its function is as follows. Catalyzes the attachment of threonine to tRNA(Thr) in a two-step reaction: L-threonine is first activated by ATP to form Thr-AMP and then transferred to the acceptor end of tRNA(Thr). Also edits incorrectly charged L-seryl-tRNA(Thr). The chain is Threonine--tRNA ligase from Acinetobacter baumannii (strain AB0057).